Reading from the N-terminus, the 308-residue chain is Phenylcoumaran benzylic ether reductase Betv6 (308 aa).

NADP(+)-binding positions include 11-17 (GGTGYIG), Arg36, and Lys45. The active-site Proton acceptor is the Lys133. Residue Arg137 participates in NADP(+) binding.

The protein belongs to the NmrA-type oxidoreductase family. Isoflavone reductase subfamily.

The catalysed reaction is (-)-dehydrodiconiferyl alcohol + NADPH + H(+) = (S)-isodihydrodehydrodiconiferyl alcohol + NADP(+). The enzyme catalyses (+)-dehydrodiconiferyl alcohol + NADPH + H(+) = (R)-isodihydrodehydrodiconiferyl alcohol + NADP(+). In terms of biological role, oxidoreductase involved in lignan biosynthesis. Catalyzes the NADPH-dependent reduction of phenylcoumaran benzylic ethers. Converts dehydrodiconiferyl alcohol (DDC) to isodihydrodehydrodiconiferyl alcohol (IDDDC). The polypeptide is Phenylcoumaran benzylic ether reductase Betv6 (Betula pendula (European white birch)).